We begin with the raw amino-acid sequence, 119 residues long: UPF0102 protein SGR_1878 (119 aa).

Belongs to the UPF0102 family.

The chain is UPF0102 protein SGR_1878 from Streptomyces griseus subsp. griseus (strain JCM 4626 / CBS 651.72 / NBRC 13350 / KCC S-0626 / ISP 5235).